The primary structure comprises 494 residues: Serine/threonine-protein kinase cst-1 (494 aa).

The interval 1-27 is disordered; that stretch reads MPPSTDSSRRNSEEGFSDGFKLDSSAL. Residues 35-286 form the Protein kinase domain; the sequence is FDIVGKLGEG…ALRLCEHTFI (252 aa). ATP contacts are provided by residues 41 to 49 and Lys64; that span reads LGEGSYGSV. The active-site Proton acceptor is Asp154. The disordered stretch occupies residues 364–413; that stretch reads IPKSAYGSSRNNGSPRVQPPGHTASACDPSNNPPFAEEGTGPNFQIGTSE. Positions 369–378 are enriched in polar residues; the sequence is YGSSRNNGSP. The SARAH domain maps to 443 to 490; it reads FEFLRNITLDELIRRKESLDSEMEEEIRELQRRYKTKRQPILDVIEIK.

It belongs to the protein kinase superfamily. STE Ser/Thr protein kinase family. STE20 subfamily. Mg(2+) is required as a cofactor. In terms of processing, proteolytically cleaved by caspase-3 during apoptosis which results in kinase activation.

The catalysed reaction is L-seryl-[protein] + ATP = O-phospho-L-seryl-[protein] + ADP + H(+). It carries out the reaction L-threonyl-[protein] + ATP = O-phospho-L-threonyl-[protein] + ADP + H(+). Its function is as follows. Serine/threonine-protein kinase which extends lifespan and delays tissue aging, probably by activating daf-16. The chain is Serine/threonine-protein kinase cst-1 (cst-1) from Caenorhabditis briggsae.